Reading from the N-terminus, the 285-residue chain is Urease accessory protein UreD (285 aa).

It belongs to the UreD family. As to quaternary structure, ureD, UreF and UreG form a complex that acts as a GTP-hydrolysis-dependent molecular chaperone, activating the urease apoprotein by helping to assemble the nickel containing metallocenter of UreC. The UreE protein probably delivers the nickel.

Its subcellular location is the cytoplasm. Required for maturation of urease via the functional incorporation of the urease nickel metallocenter. This is Urease accessory protein UreD from Azoarcus sp. (strain BH72).